We begin with the raw amino-acid sequence, 252 residues long: Ribosomal RNA small subunit methyltransferase NEP1 (252 aa).

S-adenosyl-L-methionine is bound by residues Leu180, Gly207, 212 to 214 (GKD), and 227 to 232 (LSNYPL).

This sequence belongs to the class IV-like SAM-binding methyltransferase superfamily. RNA methyltransferase NEP1 family. Homodimer. Interacts with snoRNA U3. Interacts with NOP14 and MPP10. Component of the ribosomal small subunit (SSU) processome composed of at least 40 protein subunits and snoRNA U3.

The protein resides in the nucleus. The protein localises to the nucleolus. It catalyses the reaction pseudouridine(1191) in yeast 18S rRNA + S-adenosyl-L-methionine = N(1)-methylpseudouridine(1191) in yeast 18S rRNA + S-adenosyl-L-homocysteine + H(+). Its function is as follows. S-adenosyl-L-methionine-dependent pseudouridine N(1)-methyltransferase that methylates pseudouridine at position 1189 (Psi1189) in 18S rRNA. Involved the biosynthesis of the hypermodified N1-methyl-N3-(3-amino-3-carboxypropyl) pseudouridine (m1acp3-Psi) conserved in eukaryotic 18S rRNA. N1-methylation is independent on acp-modification at the N3-position of U1191. Also has an essential role in 40S ribosomal subunit biogenesis independent on its methyltransferase activity, facilitating the incorporation of ribosomal protein S19 (RPS19A/RPS19B) during the formation of pre-ribosomes. This is Ribosomal RNA small subunit methyltransferase NEP1 from Saccharomyces cerevisiae (strain ATCC 204508 / S288c) (Baker's yeast).